The chain runs to 375 residues: Histidine biosynthesis bifunctional protein HisB (375 aa).

A histidinol-phosphatase region spans residues 1-168; that stretch reads MTPILFVDRD…GIAHELADAP (168 aa). The active-site Nucleophile is the Asp8. Mg(2+) is bound by residues Asp8, Asp10, and Asp128. The Proton donor role is filled by Asp10. Residues 169-375 form an imidazoleglycerol-phosphate dehydratase region; the sequence is RRAVVQRNTK…TALPSTKGAL (207 aa).

It in the N-terminal section; belongs to the histidinol-phosphatase family. The protein in the C-terminal section; belongs to the imidazoleglycerol-phosphate dehydratase family. It depends on Mg(2+) as a cofactor.

The protein localises to the cytoplasm. It catalyses the reaction D-erythro-1-(imidazol-4-yl)glycerol 3-phosphate = 3-(imidazol-4-yl)-2-oxopropyl phosphate + H2O. The enzyme catalyses L-histidinol phosphate + H2O = L-histidinol + phosphate. It participates in amino-acid biosynthesis; L-histidine biosynthesis; L-histidine from 5-phospho-alpha-D-ribose 1-diphosphate: step 6/9. It functions in the pathway amino-acid biosynthesis; L-histidine biosynthesis; L-histidine from 5-phospho-alpha-D-ribose 1-diphosphate: step 8/9. The chain is Histidine biosynthesis bifunctional protein HisB from Xanthomonas campestris pv. campestris (strain B100).